The sequence spans 444 residues: 23S rRNA (uracil(1939)-C(5))-methyltransferase RlmD (444 aa).

In terms of domain architecture, TRAM spans R5–E67. Residues C80, C86, C89, and C168 each coordinate [4Fe-4S] cluster. S-adenosyl-L-methionine-binding residues include Q276, F305, N310, E326, D353, and D374. C400 (nucleophile) is an active-site residue.

This sequence belongs to the class I-like SAM-binding methyltransferase superfamily. RNA M5U methyltransferase family. RlmD subfamily.

It carries out the reaction uridine(1939) in 23S rRNA + S-adenosyl-L-methionine = 5-methyluridine(1939) in 23S rRNA + S-adenosyl-L-homocysteine + H(+). Catalyzes the formation of 5-methyl-uridine at position 1939 (m5U1939) in 23S rRNA. This Xanthomonas oryzae pv. oryzae (strain KACC10331 / KXO85) protein is 23S rRNA (uracil(1939)-C(5))-methyltransferase RlmD.